The sequence spans 273 residues: Acetyl-coenzyme A carboxylase carboxyl transferase subunit alpha (273 aa).

The CoA carboxyltransferase C-terminal domain maps to 1–244 (MKKATQSKAW…KVVLKQALDE (244 aa)).

Belongs to the AccA family. As to quaternary structure, acetyl-CoA carboxylase is a heterohexamer composed of biotin carboxyl carrier protein (AccB), biotin carboxylase (AccC) and two subunits each of ACCase subunit alpha (AccA) and ACCase subunit beta (AccD).

It localises to the cytoplasm. The catalysed reaction is N(6)-carboxybiotinyl-L-lysyl-[protein] + acetyl-CoA = N(6)-biotinyl-L-lysyl-[protein] + malonyl-CoA. It participates in lipid metabolism; malonyl-CoA biosynthesis; malonyl-CoA from acetyl-CoA: step 1/1. Component of the acetyl coenzyme A carboxylase (ACC) complex. First, biotin carboxylase catalyzes the carboxylation of biotin on its carrier protein (BCCP) and then the CO(2) group is transferred by the carboxyltransferase to acetyl-CoA to form malonyl-CoA. The protein is Acetyl-coenzyme A carboxylase carboxyl transferase subunit alpha of Acinetobacter baumannii (strain AB0057).